Here is a 795-residue protein sequence, read N- to C-terminus: MKFSESWLREWVNPAITTDELTHQITMAGLEVDDVLAVAGVFDGVKVGHVVECAQHPDADKLRVTKVDVGEEELLDIVCGAANCRQGLKVAVATVGATLPGDFKIKKAKLRGQPSHGMLCSFSELGIDVESNGIMELAENAPIGMDFRDFLSLNDVTIDVDLTSNRADCFSIRGLAREVGVLNRADVTAPAVNAIVATINDTISIDVKAPAACPRYLGRIVKNVNVQAQTPLWMQEKLRRCGIRSIDPVVDITNFVMLEQGQPMHAFDLAKIEGGIVVRLAEQDEKLTLLDGSEAKLNADTLVIADQQKALAIAGVFGGEHSGVSTDTKDVLLECAFFAPDHIRGRARSYGLHTDSSMRFERGVDYALQHAAMERATQLLVEICGGDVAPVVAAESAADLPKPNQVALRRSKLDKLLGHAIPDADVVEILERLGMQVETTAEGWQATAPTWRFDIAIEQDLVEEVGRIYGYNNIPNQAPVAALNMNLHNEAKLPLKRVRDLLVDRGYQEAITYSFVEPEQQKLVVPGVDALILPNPISAEMSAMRLSLIQGLLNTVVHNQKRQQPRVRLFEYGLRFIPDAAAENGMRQEPMLAGVISGARGEEHWNMETATVDFFDMKGDLEAVLELTAKGKAYSFAATKHPALHPGQAAAIMVDGKAIGVIGTVHPELERKFGLNGRTIVFEIEWNAINTRVIPEAAAISKFPANRRDIALVVDGNIASGDIVEACRVAGGELLKDAKLFDVYVGKGVEEGKKSLAIALTLQSVERTLEEADIAAAVEAIVQAVSAQFGAALRD.

Positions 39 to 148 constitute a tRNA-binding domain; it reads AGVFDGVKVG…ENAPIGMDFR (110 aa). One can recognise a B5 domain in the interval 401 to 476; that stretch reads PKPNQVALRR…RIYGYNNIPN (76 aa). Mg(2+) is bound by residues aspartate 454, aspartate 460, glutamate 463, and glutamate 464. The region spanning 701–794 is the FDX-ACB domain; it reads SKFPANRRDI…VSAQFGAALR (94 aa).

Belongs to the phenylalanyl-tRNA synthetase beta subunit family. Type 1 subfamily. Tetramer of two alpha and two beta subunits. The cofactor is Mg(2+).

It is found in the cytoplasm. It catalyses the reaction tRNA(Phe) + L-phenylalanine + ATP = L-phenylalanyl-tRNA(Phe) + AMP + diphosphate + H(+). The polypeptide is Phenylalanine--tRNA ligase beta subunit (pheT) (Vibrio cholerae serotype O1 (strain ATCC 39315 / El Tor Inaba N16961)).